Reading from the N-terminus, the 921-residue chain is Translation initiation factor IF-2 (921 aa).

3 disordered regions span residues 81 to 118, 175 to 194, and 219 to 301; these read AVAE…AAAP, PVVE…ANQA, and VAPA…KKHE. Residues 96 to 112 show a composition bias toward pro residues; the sequence is PAAPTPPEVPAAAPAPP. A compositionally biased stretch (low complexity) spans 229-241; the sequence is RPSPAAGAPSRGA. Positions 292-301 are enriched in basic and acidic residues; it reads KKKEQPKKHE. A tr-type G domain is found at 421-590; sequence KRPPVVTIMG…LLQADLMELK (170 aa). The segment at 430 to 437 is G1; sequence GHVDHGKT. Position 430–437 (430–437) interacts with GTP; sequence GHVDHGKT. A G2 region spans residues 455–459; the sequence is GITQH. The segment at 476–479 is G3; the sequence is DTPG. Residues 476–480 and 530–533 each bind GTP; these read DTPGH and NKID. The segment at 530-533 is G4; sequence NKID. The segment at 566–568 is G5; that stretch reads SAK.

Belongs to the TRAFAC class translation factor GTPase superfamily. Classic translation factor GTPase family. IF-2 subfamily.

Its subcellular location is the cytoplasm. One of the essential components for the initiation of protein synthesis. Protects formylmethionyl-tRNA from spontaneous hydrolysis and promotes its binding to the 30S ribosomal subunits. Also involved in the hydrolysis of GTP during the formation of the 70S ribosomal complex. The polypeptide is Translation initiation factor IF-2 (Pelobacter propionicus (strain DSM 2379 / NBRC 103807 / OttBd1)).